Consider the following 371-residue polypeptide: Leucine-rich repeat-containing protein 2 (371 aa).

9 LRR repeats span residues 122 to 143 (HLRE…IQLF), 145 to 166 (AMRI…IGCL), 168 to 189 (NLKE…LGDC), 191 to 214 (NLER…SNLK), 215 to 235 (QVTF…CVLR), 238 to 260 (NLQW…DRLE), 261 to 283 (ELQS…LNLK), 284 to 305 (KLTL…LCDS), and 308 to 329 (PLKF…DGNE).

This Homo sapiens (Human) protein is Leucine-rich repeat-containing protein 2 (LRRC2).